The sequence spans 423 residues: COP9 signalosome complex subunit 3 (423 aa).

The region spanning 197-365 (NFERALYFFE…GMVCFHDNPE (169 aa)) is the PCI domain. Positions 402–423 (QFVQKSMGTQEDDVGSKTSSYS) are disordered.

The protein belongs to the CSN3 family. As to quaternary structure, component of the CSN complex, probably composed of cops1, cops2, cops3, cops4, cops5, cops6, cops7, cops8 and cops9.

It localises to the cytoplasm. The protein localises to the nucleus. Functionally, component of the COP9 signalosome complex (CSN), a complex involved in various cellular and developmental processes. The CSN complex is an essential regulator of the ubiquitin (Ubl) conjugation pathway by mediating the deneddylation of the cullin subunits of E3 ligase complexes, leading to modify the Ubl ligase activity. This chain is COP9 signalosome complex subunit 3 (cops3), found in Danio rerio (Zebrafish).